Here is a 191-residue protein sequence, read N- to C-terminus: CASP-like protein 4C2 (191 aa).

The Cytoplasmic portion of the chain corresponds to M1 to D29. The chain crosses the membrane as a helical span at residues A30–M50. The Extracellular segment spans residues G51 to R72. A helical transmembrane segment spans residues Y73–V93. Residues Y94–D116 lie on the Cytoplasmic side of the membrane. Residues Q117–L137 form a helical membrane-spanning segment. The Extracellular portion of the chain corresponds to Q138–R161. The helical transmembrane segment at V162–G182 threads the bilayer. Residues L183–R191 are Cytoplasmic-facing.

The protein belongs to the Casparian strip membrane proteins (CASP) family. As to quaternary structure, homodimer and heterodimers.

It localises to the cell membrane. The protein is CASP-like protein 4C2 of Physcomitrium patens (Spreading-leaved earth moss).